We begin with the raw amino-acid sequence, 309 residues long: Pyridoxal 5'-phosphate synthase subunit PDX1.3 (309 aa).

M1 is subject to N-acetylmethionine. A D-ribose 5-phosphate-binding site is contributed by D40. The Schiff-base intermediate with D-ribose 5-phosphate role is filled by K97. G169 serves as a coordination point for D-ribose 5-phosphate. R181 serves as a coordination point for D-glyceraldehyde 3-phosphate. D-ribose 5-phosphate is bound by residues G230 and 251–252 (GS).

This sequence belongs to the PdxS/SNZ family. In terms of assembly, homodimer or heterodimer with PDX1.1 or PDX1.2. Interacts with PDX2. As to expression, expressed in cotyledons, rapidly dividing root stele tissues, stems, leaves, flowers, mature pollen, and siliques.

The protein resides in the cytoplasm. It is found in the cell membrane. It localises to the membrane. It catalyses the reaction aldehydo-D-ribose 5-phosphate + D-glyceraldehyde 3-phosphate + L-glutamine = pyridoxal 5'-phosphate + L-glutamate + phosphate + 3 H2O + H(+). It participates in cofactor biosynthesis; pyridoxal 5'-phosphate biosynthesis. Its function is as follows. Catalyzes the formation of pyridoxal 5'-phosphate from ribose 5-phosphate (RBP), glyceraldehyde 3-phosphate (G3P) and ammonia. The ammonia is provided by PDX2. Can also use ribulose 5-phosphate and dihydroxyacetone phosphate as substrates, resulting from enzyme-catalyzed isomerization of RBP and G3P, respectively. Also plays an indirect role in resistance to singlet oxygen-generating photosensitizers. This chain is Pyridoxal 5'-phosphate synthase subunit PDX1.3 (PDX13), found in Arabidopsis thaliana (Mouse-ear cress).